The chain runs to 243 residues: Peptidyl-tRNA hydrolase (243 aa).

Tyr14 contributes to the tRNA binding site. Catalysis depends on His19, which acts as the Proton acceptor. The tRNA site is built by Phe64, Asn66, and Asn112. The segment at 188 to 243 is disordered; that stretch reads GGKAEEEKPRKDNKTTEKKPAGQSHIHQARNHNQPKVLTTGPMADILKKMFGNKGE. Residues 190–207 are compositionally biased toward basic and acidic residues; sequence KAEEEKPRKDNKTTEKKP.

This sequence belongs to the PTH family. Monomer.

Its subcellular location is the cytoplasm. The enzyme catalyses an N-acyl-L-alpha-aminoacyl-tRNA + H2O = an N-acyl-L-amino acid + a tRNA + H(+). In terms of biological role, hydrolyzes ribosome-free peptidyl-tRNAs (with 1 or more amino acids incorporated), which drop off the ribosome during protein synthesis, or as a result of ribosome stalling. Catalyzes the release of premature peptidyl moieties from peptidyl-tRNA molecules trapped in stalled 50S ribosomal subunits, and thus maintains levels of free tRNAs and 50S ribosomes. In Rhizobium leguminosarum bv. trifolii (strain WSM2304), this protein is Peptidyl-tRNA hydrolase.